Reading from the N-terminus, the 874-residue chain is Alanine--tRNA ligase (874 aa).

Zn(2+)-binding residues include histidine 564, histidine 568, cysteine 665, and histidine 669.

The protein belongs to the class-II aminoacyl-tRNA synthetase family. Zn(2+) serves as cofactor.

It localises to the cytoplasm. The enzyme catalyses tRNA(Ala) + L-alanine + ATP = L-alanyl-tRNA(Ala) + AMP + diphosphate. Its function is as follows. Catalyzes the attachment of alanine to tRNA(Ala) in a two-step reaction: alanine is first activated by ATP to form Ala-AMP and then transferred to the acceptor end of tRNA(Ala). Also edits incorrectly charged Ser-tRNA(Ala) and Gly-tRNA(Ala) via its editing domain. The chain is Alanine--tRNA ligase from Delftia acidovorans (strain DSM 14801 / SPH-1).